Reading from the N-terminus, the 232-residue chain is Ubiquinone biosynthesis O-methyltransferase (232 aa).

Residues R36, G55, D76, and L120 each contribute to the S-adenosyl-L-methionine site.

This sequence belongs to the methyltransferase superfamily. UbiG/COQ3 family.

It carries out the reaction a 3-demethylubiquinol + S-adenosyl-L-methionine = a ubiquinol + S-adenosyl-L-homocysteine + H(+). It catalyses the reaction a 3-(all-trans-polyprenyl)benzene-1,2-diol + S-adenosyl-L-methionine = a 2-methoxy-6-(all-trans-polyprenyl)phenol + S-adenosyl-L-homocysteine + H(+). It functions in the pathway cofactor biosynthesis; ubiquinone biosynthesis. In terms of biological role, O-methyltransferase that catalyzes the 2 O-methylation steps in the ubiquinone biosynthetic pathway. The polypeptide is Ubiquinone biosynthesis O-methyltransferase (Pseudomonas aeruginosa (strain ATCC 15692 / DSM 22644 / CIP 104116 / JCM 14847 / LMG 12228 / 1C / PRS 101 / PAO1)).